We begin with the raw amino-acid sequence, 290 residues long: Pyridoxal kinase PdxY (290 aa).

Residues Ser12 and 47–48 (TQ) each bind substrate. ATP-binding positions include Asp114, Glu151, Lys184, and 211-214 (RPLL). Position 225 (Asp225) interacts with substrate.

This sequence belongs to the pyridoxine kinase family. PdxY subfamily. As to quaternary structure, homodimer. It depends on Mg(2+) as a cofactor.

The enzyme catalyses pyridoxal + ATP = pyridoxal 5'-phosphate + ADP + H(+). It participates in cofactor metabolism; pyridoxal 5'-phosphate salvage; pyridoxal 5'-phosphate from pyridoxal: step 1/1. Its function is as follows. Pyridoxal kinase involved in the salvage pathway of pyridoxal 5'-phosphate (PLP). Catalyzes the phosphorylation of pyridoxal to PLP. The chain is Pyridoxal kinase PdxY from Pseudomonas putida (strain ATCC 700007 / DSM 6899 / JCM 31910 / BCRC 17059 / LMG 24140 / F1).